Here is a 226-residue protein sequence, read N- to C-terminus: MDAIQEVKRIIPEVQKYVNQRMEEFERLGREGWTHFDFRPFLDIDYDAGLFSELSFCILTANSSATLGIKIQAHLGEEGFLNKTKEELEEVFRKFGHRYAGQRAERIVEAREKFPKVKSLIEKEKNSKVIRELLADPKSPYKIKGFGYKEASHFLRNIGFKDLAIIDRHISRFLMEKGLLRQVKSITPKVYLEAEKALESLAKELGLSLGELDLYIFYIKTKKVLK.

Residues Lys149 and Asp167 contribute to the active site.

The protein belongs to the type-2 OGG1 family.

It catalyses the reaction 2'-deoxyribonucleotide-(2'-deoxyribose 5'-phosphate)-2'-deoxyribonucleotide-DNA = a 3'-end 2'-deoxyribonucleotide-(2,3-dehydro-2,3-deoxyribose 5'-phosphate)-DNA + a 5'-end 5'-phospho-2'-deoxyribonucleoside-DNA + H(+). Functionally, catalyzes the excision of an oxidatively damaged form of guanine (7,8-dihydro-8-oxoguanine = 8-oxoG) from DNA. Also cleaves the DNA backbone at apurinic/apyrimidinic sites (AP sites). The polypeptide is 8-oxoguanine DNA glycosylase/AP lyase (Aquifex aeolicus (strain VF5)).